The sequence spans 317 residues: D-alanine--D-alanine ligase (317 aa).

An ATP-grasp domain is found at 103–299 (KHIFHSLNID…FNELVKIIVE (197 aa)). 130-183 (KVDYPYVLKPINEGSSIGVHMIFSHEDYLELKNNSSTIMEKMIIEEYIPGIELH) contacts ATP. The Mg(2+) site is built by D251, E265, and N267.

The protein belongs to the D-alanine--D-alanine ligase family. Mg(2+) serves as cofactor. Requires Mn(2+) as cofactor.

Its subcellular location is the cytoplasm. It carries out the reaction 2 D-alanine + ATP = D-alanyl-D-alanine + ADP + phosphate + H(+). Its pathway is cell wall biogenesis; peptidoglycan biosynthesis. Cell wall formation. The sequence is that of D-alanine--D-alanine ligase from Wolbachia pipientis subsp. Culex pipiens (strain wPip).